Reading from the N-terminus, the 385-residue chain is MKLVHKDIEKDNAGQVTLIPDEAEDMWHTYNLLQVGDSLRASTIRKVQTESSTGSVGSSRVRTTLTLCVETIDFDSQACQLRVKGTNIQENQYVKMGAYHTIELELNRKFTLAKKVWDSVVLDRIEQACDPAQKADVAAVVMQEGLANLVLVTPAMTLLRAKVEVTIPRKRKGSCTQHDKALERFYEAVMQGILRHFNFDVVKCILVASPGFVKDQFISYLFKEAVRQDCKLLLENRSKFMVVHSSSGHKYSLKEVLCDPAVTARLSDTKAAGEVKALEDFYKMLQQEPDRAFYGLAHVERASEALAIDILLISDTLFRHQDVATRGRYVRLVDNVKENGGTVRIFSSLHVSGEQLNQLSGVAAILRFPIADVSEPEENSSSDED.

The protein belongs to the eukaryotic release factor 1 family. Pelota subfamily. In terms of assembly, component of the Pelota-HBS1L complex, also named Dom34-Hbs1 complex, composed of PELO and HBS1L. The cofactor is a divalent metal cation.

The protein localises to the cytoplasm. Component of the Pelota-HBS1L complex, a complex that recognizes stalled ribosomes and triggers the No-Go Decay (NGD) pathway. In the Pelota-HBS1L complex, PELO recognizes ribosomes stalled at the 3' end of an mRNA and engages stalled ribosomes by destabilizing mRNA in the mRNA channel. Following mRNA extraction from stalled ribosomes by the SKI complex, the Pelota-HBS1L complex promotes recruitment of ABCE1, which drives the disassembly of stalled ribosomes, followed by degradation of damaged mRNAs as part of the NGD pathway. The polypeptide is Protein pelota homolog (pelo) (Danio rerio (Zebrafish)).